A 433-amino-acid chain; its full sequence is Dihydrolipoyllysine-residue acetyltransferase component of pyruvate dehydrogenase complex (433 aa).

The region spanning 2–77 (AFEFRLPDIG…VVGDVIVKID (76 aa)) is the Lipoyl-binding domain. Lys-43 is subject to N6-lipoyllysine. Disordered stretches follow at residues 80–134 (DAEE…PSVR) and 164–204 (YLNG…FPET). 2 stretches are compositionally biased toward basic and acidic residues: residues 84-103 (MQFKGHGDDEDSKKEEKEQE) and 117-126 (EKTEVDESKT). The Peripheral subunit-binding (PSBD) domain maps to 128-165 (KAMPSVRKYARENGVNIKAVNGSGKNGRITKEDIDAYL). A compositionally biased stretch (low complexity) spans 166–188 (NGGSSEEGSNTSVASESTSSDVV). The active site involves His-404.

The protein belongs to the 2-oxoacid dehydrogenase family. As to quaternary structure, forms a 24-polypeptide structural core with octahedral symmetry. It depends on (R)-lipoate as a cofactor.

It carries out the reaction N(6)-[(R)-dihydrolipoyl]-L-lysyl-[protein] + acetyl-CoA = N(6)-[(R)-S(8)-acetyldihydrolipoyl]-L-lysyl-[protein] + CoA. Its function is as follows. The pyruvate dehydrogenase complex catalyzes the overall conversion of pyruvate to acetyl-CoA and CO(2). It contains multiple copies of three enzymatic components: pyruvate dehydrogenase (E1), dihydrolipoamide acetyltransferase (E2) and lipoamide dehydrogenase (E3). The chain is Dihydrolipoyllysine-residue acetyltransferase component of pyruvate dehydrogenase complex (pdhC) from Staphylococcus epidermidis (strain ATCC 12228 / FDA PCI 1200).